Here is a 323-residue protein sequence, read N- to C-terminus: Queuosine 5'-phosphate N-glycosylase/hydrolase (323 aa).

Positions 72, 93, 199, 229, 231, 298, 302, and 306 each coordinate queuosine 5'-phosphate. Asp-231 serves as the catalytic Nucleophile or transition state stabilizer.

This sequence belongs to the QNG1 protein family. In terms of assembly, monomer.

It catalyses the reaction queuosine 5'-phosphate + H2O = queuine + D-ribose 5-phosphate. Its function is as follows. Catalyzes the hydrolysis of queuosine 5'-phosphate, releasing the nucleobase queuine (q). Is likely required for salvage of queuine from exogenous queuosine (Q) that is imported and then converted to queuosine 5'-phosphate intracellularly. In vitro, can also catalyze the release of the q base directly from Q as substrate; however, Q may not be the biologically relevant substrate. Shows a very low activity on queuosine 3',5'-diphosphate, and cannot release q from queuosine 3'-phosphate and from the 5'-nucleotides AMP, UMP, CMP or GMP, indicating specificity for the queuine base. The sequence is that of Queuosine 5'-phosphate N-glycosylase/hydrolase from Sphaerobacter thermophilus (strain ATCC 49802 / DSM 20745 / KCCM 41009 / NCIMB 13125 / S 6022).